The primary structure comprises 1158 residues: Formin-C (1158 aa).

3 disordered regions span residues 8-29 (INGN…PSVS), 417-523 (PNTS…LSCL), and 990-1052 (INNN…NNSQ). Residues 20-388 (QQPQQNPSVS…EYSQRKLEMI (369 aa)) form the GBD/FH3 domain. Residues 417–437 (PNTSDLFDSSTLEDTYDGNND) show a composition bias toward polar residues. Low complexity predominate over residues 438 to 481 (TNSCTSISTSSTPIHISQPTTLIVPSTTPNHPPQQSQQTPPLQL). Residues 479 to 515 (LQLQKEKEKEKEKEKEKEKEKEKEQQQQQQQSNKQST) are a coiled coil. Positions 482–503 (QKEKEKEKEKEKEKEKEKEKEQ) are enriched in basic and acidic residues. Positions 601-998 (TKSPITPSKR…IINNNNNNNN (398 aa)) constitute an FH2 domain. Positions 1134–1158 (SDDPMAVIIEALKTGSPNDMVKRAF) constitute a DAD domain.

It belongs to the formin homology family. Diaphanous subfamily. Interacts (via GBD/FH3 domain) with activated Rho-GTPases.

It localises to the cytoplasm. The protein resides in the cytosol. Its subcellular location is the cytoskeleton. Its function is as follows. Formins play an important role in the nucleation of actin and the formation of linear actin filaments. The chain is Formin-C (forC) from Dictyostelium discoideum (Social amoeba).